The chain runs to 636 residues: MAPSQQEKYDIVIVGAGPVGIVLSLCMSRWGYKVKHIDNRPVPTATGRADGIQPRSTEILRNLGLKRQIMAFKPAKVYDVAFWDPLPGGQGIHRTGSWPSCPRFIDTRYPFTTLVHQGKIERVFLDEIQKAGTTVERPWTIVGFKNDGLDETYPVEVQLKSIDTNVIETVRTKYLFSGEGARSFIRQQLGIQIQYKDPISYVWGVMDGVVRTNFPDIETKCTIHSDAGSIMVIPREDNMVRLYVQIASSDDPDFDPRKTATAEDVQATARKILQPYWVEWDRVEWYSVYPIGQGISEKYTLDERVFMGGDACHTHSPKAGQGMNTAFHDALNMAWKLHAVESGLAKRSILSTYETERKDIAETLLSFDNKYAALFSKRRPTAGEVGEASHTTAAAGGEEDEFVKTFKSSCEFTSGYGVAYKPNVFTWDATHPAQSPLFDVPGVRLTPGRAFTPTTVTRLADSNHVHLEQEIPANGAFRIFIFAGKQDKTSKAITDLAANLEKERSFLSVYRRADIADVSFFENHLPHSKLFSICLVYAGEKNQIDVDSIPKILRDYHHHLYADNIPDVRVPQATYAAHEKLGFDVEKGGVVVTRPDSHVACTVQLSEGSGTVDALNAFFGSFATKPLGQDSQQSRL.

Residues 10 to 39 (DIVI…HIDN), 241 to 243 (RLY), Tyr289, and Asp310 contribute to the FAD site. A helical transmembrane segment spans residues 11 to 28 (IVIVGAGPVGIVLSLCMS).

Belongs to the PheA/TfdB FAD monooxygenase family. FAD is required as a cofactor.

The protein resides in the membrane. It carries out the reaction 4-hydroxybenzoate + NADH + O2 + H(+) = 3,4-dihydroxybenzoate + NAD(+) + H2O. It catalyses the reaction 4-hydroxybenzoate + NADPH + O2 + H(+) = 3,4-dihydroxybenzoate + NADP(+) + H2O. In terms of biological role, FAD-dependent monooxygenase; part of the benzoic acid degradation pathway also known as the protocatechuic acid pathway. Benzoic acid debradation begins with the conversion of benzoic acid into 4-hydroxybenzoic acid through hydroxylation by the benzoate-4-monooxygenase bphA, and its partner NADPH-cytochrome P450 reductase cprA which act as a mediator in electron donation from NADPH. 4-Hydroxybenzoic acid is then converted into 3,4-dihydroxybenzoic acid (also called protocatechuic acid) by the p-hydroxybenzoate-m-hydroxylase phhA. Protocatechuic acid is converted into 3-carboxy-cis,cis-muconic acid by the intradiol ring-cleavage dioxygenase prcA, which is further metabolized through the 3-oxoadipate pathway to finally enter the tricarboxylic acid cycle (TCA). This chain is p-hydroxybenzoate-m-hydroxylase A, found in Aspergillus niger (strain ATCC MYA-4892 / CBS 513.88 / FGSC A1513).